Here is a 397-residue protein sequence, read N- to C-terminus: MKRFKKASSIIETLKQQGHEAYFVGGSVRDLIIDRPIGDIDIATSALPEEVMAIFPRHVPVGLEHGTVIVVENGEPYEVTTFRTESEYEDFRRPSSVQFVRSLEEDLKRRDFTMNAIAMTEEGEMVDLFAGQEAIQKREIVTVGNAADRFQEDALRMMRGIRFVSTLGFSLETKTKQAIETYGHLLEHIAIERITVEFEKLLTGTYCVKALKELVETKLFSHLPYLQMSEERLLKATQYNWDSFETDIEAWAFFLYCIGEEHPAVFLRQWKFSNKKIKDIVAVLLTVRKRKEKDWDTVLLYKTGIHIAEMAERVYEAMIESYDHTSVKRVQTLFQALPIKNRQEMNVTGNDLLNWASKKPGPWVAEMIQKIEEAIVQGNVVNEKECIREWLQECNLL.

ATP is bound by residues Gly26 and Arg29. Residues Gly26 and Arg29 each contribute to the CTP site. The Mg(2+) site is built by Asp39 and Asp41. Arg110, Asp153, Arg156, Arg159, and Arg162 together coordinate ATP. CTP-binding residues include Arg110, Asp153, Arg156, Arg159, and Arg162.

The protein belongs to the tRNA nucleotidyltransferase/poly(A) polymerase family. Bacterial CCA-adding enzyme type 3 subfamily. As to quaternary structure, homodimer. The cofactor is Mg(2+).

The catalysed reaction is a tRNA precursor + 2 CTP + ATP = a tRNA with a 3' CCA end + 3 diphosphate. It carries out the reaction a tRNA with a 3' CCA end + 2 CTP + ATP = a tRNA with a 3' CCACCA end + 3 diphosphate. In terms of biological role, catalyzes the addition and repair of the essential 3'-terminal CCA sequence in tRNAs without using a nucleic acid template. Adds these three nucleotides in the order of C, C, and A to the tRNA nucleotide-73, using CTP and ATP as substrates and producing inorganic pyrophosphate. tRNA 3'-terminal CCA addition is required both for tRNA processing and repair. Also involved in tRNA surveillance by mediating tandem CCA addition to generate a CCACCA at the 3' terminus of unstable tRNAs. While stable tRNAs receive only 3'-terminal CCA, unstable tRNAs are marked with CCACCA and rapidly degraded. This is CCA-adding enzyme from Bacillus cereus (strain ATCC 10987 / NRS 248).